The primary structure comprises 475 residues: Tubulin gamma-1 chain (475 aa).

142–148 (AGGTGSG) serves as a coordination point for GTP. Positions 453–475 (VKRGNGPVDSKSEDSRSVTSAGS) are disordered.

Belongs to the tubulin family. As to quaternary structure, interacts with Ote.

The protein resides in the cytoplasm. It is found in the cytoskeleton. The protein localises to the microtubule organizing center. It localises to the centrosome. Its subcellular location is the perinuclear region. Its function is as follows. Tubulin is the major constituent of microtubules. The gamma chain is found at microtubule organizing centers (MTOC) such as the spindle poles or the centrosome, suggesting that it is involved in the minus-end nucleation of microtubule assembly. The chain is Tubulin gamma-1 chain (gammaTub23C) from Drosophila melanogaster (Fruit fly).